A 345-amino-acid chain; its full sequence is NADH-quinone oxidoreductase subunit H (345 aa).

The next 8 membrane-spanning stretches (helical) occupy residues 9–29, 82–102, 108–128, 154–174, 183–203, 241–261, 282–302, and 325–345; these read ALGAFLVINAMLLSASLLVFA, VVMVVIAMTTASLIPFAEGVV, VGVIMLLALTSISVYGVTLAG, MGLAVISVVLIAGSLNFMEIV, LLGWNAVRNPIGCLIFIVTAF, YVNWFIASFFIVTLFFGGYLV, LLQFVSLMLKVSFFSFVFIWV, and IALANAILIALGVVLFGAVGL.

This sequence belongs to the complex I subunit 1 family. In terms of assembly, NDH-1 is composed of 14 different subunits. Subunits NuoA, H, J, K, L, M, N constitute the membrane sector of the complex.

Its subcellular location is the cell inner membrane. The catalysed reaction is a quinone + NADH + 5 H(+)(in) = a quinol + NAD(+) + 4 H(+)(out). Functionally, NDH-1 shuttles electrons from NADH, via FMN and iron-sulfur (Fe-S) centers, to quinones in the respiratory chain. The immediate electron acceptor for the enzyme in this species is believed to be ubiquinone. Couples the redox reaction to proton translocation (for every two electrons transferred, four hydrogen ions are translocated across the cytoplasmic membrane), and thus conserves the redox energy in a proton gradient. This subunit may bind ubiquinone. In Salinibacter ruber (strain DSM 13855 / M31), this protein is NADH-quinone oxidoreductase subunit H.